The following is a 282-amino-acid chain: Formamidopyrimidine-DNA glycosylase (282 aa).

The active-site Schiff-base intermediate with DNA is the proline 2. Glutamate 3 (proton donor) is an active-site residue. The active-site Proton donor; for beta-elimination activity is lysine 60. Histidine 99, arginine 118, and lysine 163 together coordinate DNA. The segment at 248 to 282 (WVYRRSGKNCKKCGEKILREKICGRSTHWCPNCQK) adopts an FPG-type zinc-finger fold. Arginine 272 functions as the Proton donor; for delta-elimination activity in the catalytic mechanism.

It belongs to the FPG family. In terms of assembly, monomer. Requires Zn(2+) as cofactor.

It carries out the reaction Hydrolysis of DNA containing ring-opened 7-methylguanine residues, releasing 2,6-diamino-4-hydroxy-5-(N-methyl)formamidopyrimidine.. The catalysed reaction is 2'-deoxyribonucleotide-(2'-deoxyribose 5'-phosphate)-2'-deoxyribonucleotide-DNA = a 3'-end 2'-deoxyribonucleotide-(2,3-dehydro-2,3-deoxyribose 5'-phosphate)-DNA + a 5'-end 5'-phospho-2'-deoxyribonucleoside-DNA + H(+). Involved in base excision repair of DNA damaged by oxidation or by mutagenic agents. Acts as a DNA glycosylase that recognizes and removes damaged bases. Has a preference for oxidized purines, such as 7,8-dihydro-8-oxoguanine (8-oxoG). Has AP (apurinic/apyrimidinic) lyase activity and introduces nicks in the DNA strand. Cleaves the DNA backbone by beta-delta elimination to generate a single-strand break at the site of the removed base with both 3'- and 5'-phosphates. This Prochlorococcus marinus (strain NATL2A) protein is Formamidopyrimidine-DNA glycosylase.